We begin with the raw amino-acid sequence, 352 residues long: MKQNVIALVFGGRSSEHSVALRSAATIHAALMALGHRVHCVGIDREGNWRYQGEPCQFPGAVDRSAPLISIRPGHRSLSYTTQESGTVEIGIDLLFPALHGRWGEDGTIQGLAAMCGLPCVGSGVLGSAMAMDKDVTKRMVQSAGLVVVPWLAMNSMRPWEELVECLGSSTLFVKPATSGSSIGVSRVSNALEYAAAFAIAAREDTKVLVEAAVCGREIECGVLELEEGLMASVVGEIIKKEGHAYYDYQAKYDSNSVTGLRVPSLLPPDIVARIQALSVQAFRCLELKGYARVDFFLTEEGEIILNEINTLPGFTSASMYPKMFECSGYPPPKLVGALVEYGLSSASKERL.

An ATP-grasp domain is found at 138–341 (KRMVQSAGLV…PPKLVGALVE (204 aa)). 165–220 (ECLGSSTLFVKPATSGSSIGVSRVSNALEYAAAFAIAAREDTKVLVEAAVCGREIE) contributes to the ATP binding site. Residues Asp295, Glu308, and Asn310 each coordinate Mg(2+).

The protein belongs to the D-alanine--D-alanine ligase family. The cofactor is Mg(2+). Mn(2+) is required as a cofactor.

The protein resides in the cytoplasm. The catalysed reaction is 2 D-alanine + ATP = D-alanyl-D-alanine + ADP + phosphate + H(+). It functions in the pathway cell wall biogenesis; peptidoglycan biosynthesis. Functionally, cell wall formation. This Pseudomonas putida (strain ATCC 47054 / DSM 6125 / CFBP 8728 / NCIMB 11950 / KT2440) protein is D-alanine--D-alanine ligase A.